A 645-amino-acid chain; its full sequence is Meiosis induction protein kinase IME2/SME1 (645 aa).

The tract at residues 1 to 24 is disordered; the sequence is MVEKRSRQSSSSGSEFSVPPDVDN. Low complexity predominate over residues 8 to 17; that stretch reads QSSSSGSEFS. The Protein kinase domain maps to 38 to 386; it reads YQLIEKLGAG…AQELCEMPFF (349 aa). ATP-binding positions include 44–52 and Lys67; that span reads LGAGSFGCV. Asp193 (proton acceptor) is an active-site residue.

Belongs to the protein kinase superfamily. Ser/Thr protein kinase family.

The enzyme catalyses L-seryl-[protein] + ATP = O-phospho-L-seryl-[protein] + ADP + H(+). It carries out the reaction L-threonyl-[protein] + ATP = O-phospho-L-threonyl-[protein] + ADP + H(+). Its function is as follows. Protein kinase which is essential for the initiation of meiosis and sporulation. This is Meiosis induction protein kinase IME2/SME1 (IME2) from Saccharomyces cerevisiae (strain ATCC 204508 / S288c) (Baker's yeast).